A 118-amino-acid polypeptide reads, in one-letter code: Non-specific lipid-transfer protein (118 aa).

Positions 1–25 (MDCIRILWSVAVGLLLVSWRPTMFA) are cleaved as a signal peptide. Cystine bridges form between C30–C76, C40–C53, C54–C98, and C74–C113.

It belongs to the plant LTP family.

Functionally, plant non-specific lipid-transfer proteins transfer phospholipids as well as galactolipids across membranes. May play a role in wax or cutin deposition in the cell walls of expanding epidermal cells and certain secretory tissues. This Ambrosia artemisiifolia (Common ragweed) protein is Non-specific lipid-transfer protein.